The sequence spans 50 residues: Photosystem II reaction center protein K (50 aa).

Residues 1–13 (MLNLNFTNITVMG) constitute a propeptide that is removed on maturation. A helical transmembrane segment spans residues 25–45 (IVDILPIIPILFFLLAFVWQA).

This sequence belongs to the PsbK family. PSII is composed of 1 copy each of membrane proteins PsbA, PsbB, PsbC, PsbD, PsbE, PsbF, PsbH, PsbI, PsbJ, PsbK, PsbL, PsbM, PsbT, PsbY, PsbZ, Psb30/Ycf12, at least 3 peripheral proteins of the oxygen-evolving complex and a large number of cofactors. It forms dimeric complexes.

The protein localises to the plastid. Its subcellular location is the chloroplast thylakoid membrane. One of the components of the core complex of photosystem II (PSII). PSII is a light-driven water:plastoquinone oxidoreductase that uses light energy to abstract electrons from H(2)O, generating O(2) and a proton gradient subsequently used for ATP formation. It consists of a core antenna complex that captures photons, and an electron transfer chain that converts photonic excitation into a charge separation. This Euglena myxocylindracea protein is Photosystem II reaction center protein K.